The primary structure comprises 228 residues: Small ribosomal subunit protein uS3 (228 aa).

In terms of domain architecture, KH type-2 spans 39–107 (VREFIRERLK…PVHINIEEIR (69 aa)).

It belongs to the universal ribosomal protein uS3 family. Part of the 30S ribosomal subunit. Forms a tight complex with proteins S10 and S14.

In terms of biological role, binds the lower part of the 30S subunit head. Binds mRNA in the 70S ribosome, positioning it for translation. The chain is Small ribosomal subunit protein uS3 from Halorhodospira halophila (strain DSM 244 / SL1) (Ectothiorhodospira halophila (strain DSM 244 / SL1)).